A 368-amino-acid chain; its full sequence is Quinolinate synthase (368 aa).

Residues His-46 and Ser-63 each contribute to the iminosuccinate site. Cys-110 serves as a coordination point for [4Fe-4S] cluster. Iminosuccinate is bound by residues 141–143 (YVN) and Ser-162. Cys-230 is a [4Fe-4S] cluster binding site. Iminosuccinate is bound by residues 256-258 (HPE) and Thr-273. A [4Fe-4S] cluster-binding site is contributed by Cys-320.

The protein belongs to the quinolinate synthase family. Type 3 subfamily. [4Fe-4S] cluster serves as cofactor.

It is found in the cytoplasm. The enzyme catalyses iminosuccinate + dihydroxyacetone phosphate = quinolinate + phosphate + 2 H2O + H(+). It participates in cofactor biosynthesis; NAD(+) biosynthesis; quinolinate from iminoaspartate: step 1/1. Functionally, catalyzes the condensation of iminoaspartate with dihydroxyacetone phosphate to form quinolinate. The polypeptide is Quinolinate synthase (Bacillus cereus (strain Q1)).